A 1183-amino-acid polypeptide reads, in one-letter code: PAN2-PAN3 deadenylation complex catalytic subunit PAN2 (1183 aa).

2 WD repeats span residues 150–189 (SIENSSPVVKLAPLHRTVLAAGLSGQVTVLDPRTGFKAAQ) and 289–328 (DVSSYITSMALSSRGDYLAFGDGDGQLHVWTTNETGENAA). Residues 331-478 (ENGSIVLPPF…EEIEEELNDG (148 aa)) form a linker region. The interval 439-470 (AEGRARGKGRRDSGPRFRSEKDKKGTYKDKEE) is disordered. Over residues 448–469 (RRDSGPRFRSEKDKKGTYKDKE) the composition is skewed to basic and acidic residues. The USP domain occupies 479–864 (EVPKYYRKVE…VPAVIILERE (386 aa)). The Exonuclease domain maps to 916–1085 (VAIDAEFVAL…HDSIEDAHFA (170 aa)). Positions 919, 921, 1028, and 1081 each coordinate a divalent metal cation. Residues 1155 to 1183 (KSRMATPPPPTKLGLPQWASQNSPSPLRR) form a disordered region. A compositionally biased stretch (polar residues) spans 1172–1183 (WASQNSPSPLRR).

Belongs to the peptidase C19 family. PAN2 subfamily. Forms a heterotrimer with an asymmetric homodimer of the regulatory subunit PAN3 to form the poly(A)-nuclease (PAN) deadenylation complex. The cofactor is a divalent metal cation.

Its subcellular location is the cytoplasm. It carries out the reaction Exonucleolytic cleavage of poly(A) to 5'-AMP.. Its activity is regulated as follows. Positively regulated by the regulatory subunit PAN3. Catalytic subunit of the poly(A)-nuclease (PAN) deadenylation complex, one of two cytoplasmic mRNA deadenylases involved in mRNA turnover. PAN specifically shortens poly(A) tails of RNA and the activity is stimulated by poly(A)-binding protein PAB1. PAN deadenylation is followed by rapid degradation of the shortened mRNA tails by the CCR4-NOT complex. Deadenylated mRNAs are then degraded by two alternative mechanisms, namely exosome-mediated 3'-5' exonucleolytic degradation, or deadenylation-dependent mRNA decaping and subsequent 5'-3' exonucleolytic degradation by XRN1. May also be involved in post-transcriptional maturation of mRNA poly(A) tails. This is PAN2-PAN3 deadenylation complex catalytic subunit PAN2 from Cryptococcus neoformans var. neoformans serotype D (strain B-3501A) (Filobasidiella neoformans).